Consider the following 504-residue polypeptide: ATP synthase subunit alpha (504 aa).

An ATP-binding site is contributed by 171–178; that stretch reads GDRQTGKT.

The protein belongs to the ATPase alpha/beta chains family. F-type ATPases have 2 components, CF(1) - the catalytic core - and CF(0) - the membrane proton channel. CF(1) has five subunits: alpha(3), beta(3), gamma(1), delta(1), epsilon(1). CF(0) has three main subunits: a(1), b(2) and c(9-12). The alpha and beta chains form an alternating ring which encloses part of the gamma chain. CF(1) is attached to CF(0) by a central stalk formed by the gamma and epsilon chains, while a peripheral stalk is formed by the delta and b chains.

The protein resides in the cell inner membrane. It catalyses the reaction ATP + H2O + 4 H(+)(in) = ADP + phosphate + 5 H(+)(out). Produces ATP from ADP in the presence of a proton gradient across the membrane. The alpha chain is a regulatory subunit. The polypeptide is ATP synthase subunit alpha (Helicobacter hepaticus (strain ATCC 51449 / 3B1)).